Reading from the N-terminus, the 760-residue chain is 5-methyltetrahydropteroyltriglutamate--homocysteine methyltransferase (760 aa).

5-methyltetrahydropteroyltri-L-glutamate contacts are provided by residues 17–20 and Lys118; that span reads RELK. Residues 436 to 438 and Glu489 each bind L-homocysteine; that span reads IGS. Residues 436 to 438 and Glu489 each bind L-methionine; that span reads IGS. 5-methyltetrahydropteroyltri-L-glutamate is bound by residues 520–521 and Trp566; that span reads RC. Asp604 contributes to the L-homocysteine binding site. Asp604 contributes to the L-methionine binding site. Glu610 lines the 5-methyltetrahydropteroyltri-L-glutamate pocket. 3 residues coordinate Zn(2+): His646, Cys648, and Glu670. His699 acts as the Proton donor in catalysis. A Zn(2+)-binding site is contributed by Cys731.

The protein belongs to the vitamin-B12 independent methionine synthase family. Zn(2+) serves as cofactor.

The catalysed reaction is 5-methyltetrahydropteroyltri-L-glutamate + L-homocysteine = tetrahydropteroyltri-L-glutamate + L-methionine. It participates in amino-acid biosynthesis; L-methionine biosynthesis via de novo pathway; L-methionine from L-homocysteine (MetE route): step 1/1. Catalyzes the transfer of a methyl group from 5-methyltetrahydrofolate to homocysteine resulting in methionine formation. This is 5-methyltetrahydropteroyltriglutamate--homocysteine methyltransferase from Vibrio parahaemolyticus serotype O3:K6 (strain RIMD 2210633).